A 282-amino-acid chain; its full sequence is Thiazole synthase (282 aa).

Lys113 functions as the Schiff-base intermediate with DXP in the catalytic mechanism. 1-deoxy-D-xylulose 5-phosphate contacts are provided by residues Gly174, Ala201 to Gly202, and Asn223 to Thr224.

It belongs to the ThiG family. As to quaternary structure, homotetramer. Forms heterodimers with either ThiH or ThiS.

Its subcellular location is the cytoplasm. The enzyme catalyses [ThiS sulfur-carrier protein]-C-terminal-Gly-aminoethanethioate + 2-iminoacetate + 1-deoxy-D-xylulose 5-phosphate = [ThiS sulfur-carrier protein]-C-terminal Gly-Gly + 2-[(2R,5Z)-2-carboxy-4-methylthiazol-5(2H)-ylidene]ethyl phosphate + 2 H2O + H(+). Its pathway is cofactor biosynthesis; thiamine diphosphate biosynthesis. Catalyzes the rearrangement of 1-deoxy-D-xylulose 5-phosphate (DXP) to produce the thiazole phosphate moiety of thiamine. Sulfur is provided by the thiocarboxylate moiety of the carrier protein ThiS. In vitro, sulfur can be provided by H(2)S. This Cupriavidus metallidurans (strain ATCC 43123 / DSM 2839 / NBRC 102507 / CH34) (Ralstonia metallidurans) protein is Thiazole synthase.